We begin with the raw amino-acid sequence, 338 residues long: Mitoferrin-1 (338 aa).

The tract at residues 1–42 (MELRSGSVGSQAVARRMDGDSRDGGGGKDATGSEDYENLPTS) is disordered. The segment covering 15-26 (RRMDGDSRDGGG) has biased composition (basic and acidic residues). Solcar repeat units follow at residues 43 to 131 (ASVS…MKRT), 141 to 225 (NSHL…LQEQ), and 232 to 326 (YNPQ…FKYF). 6 helical membrane passes run 45-64 (VSTHMTAGAMAGILEHSVMY), 106-125 (GVNVMIMGAGPAHAMYFACY), 143-162 (HLANGIAGSMATLLHDAVMN), 200-219 (SYTTQLTMNIPFQSIHFITY), 234-253 (PQSHIISGGLAGALAAAATT), and 301-320 (GIQARVIYQMPSTAISWSVY).

Belongs to the mitochondrial carrier (TC 2.A.29) family. In terms of assembly, interacts with ACB10; this interaction stabilizes SLC25A37 and enhances the function of SLC25A37 to import mitochondrial iron during erythroid differentiation.

It localises to the mitochondrion inner membrane. It carries out the reaction Fe(2+)(in) = Fe(2+)(out). In terms of biological role, mitochondrial iron transporter that specifically mediates iron uptake in developing erythroid cells, thereby playing an essential role in heme biosynthesis. The sequence is that of Mitoferrin-1 (SLC25A37) from Homo sapiens (Human).